Reading from the N-terminus, the 431-residue chain is Nuclear envelope integral membrane protein 1 (431 aa).

Positions 1 to 29 (MAGEVEGEGCRVSWGVLVALLLLPLPSLC) are cleaved as a signal peptide. The next 5 helical transmembrane spans lie at 151 to 171 (PRLFFVFLCGLLLFFYGDTLS), 175 to 195 (IFYYSTGITVGMLASMLILVF), 206 to 226 (PFVALLLGGWSVSIYVIQLVF), 236 to 256 (YWQYLLGYLGIVGFVSFAFCY), and 266 to 286 (SINILNWTLQLIGLLLMYISV). Positions 176 to 287 (FYYSTGITVG…GLLLMYISVQ (112 aa)) are a; required for its colocalization with lamins at the nuclear envelope. A Nuclear localization signal motif is present at residues 317–325 (RKIKLKRGK). The b; required for interaction with ran stretch occupies residues 326–395 (PSPPRLLTEE…LTPNEVSVHE (70 aa)). The tract at residues 326 to 431 (PSPPRLLTEE…IEPVLYQDLR (106 aa)) is interaction with banf1-a and banf1-b. A BAF-binding site (BBS); essential for interaction with banf1-a, banf1-b and ran region spans residues 368 to 375 (SRIQSPKR).

This sequence belongs to the NEMP family. In terms of assembly, homooligomer. Interacts with banf1-a and banf1-b. Interacts with ran-gtp. Post-translationally, phosphorylated.

The protein resides in the nucleus inner membrane. Its subcellular location is the nucleus envelope. In terms of biological role, in concert with ran, required for proper eye development. May be involved in the expression of early eye marker genes. Contributes to nuclear envelope stiffness in germ cells. Required for fertility. Essential for normal erythropoiesis. Required for efficient nuclear envelope opening and enucleation during the late stages of erythroblast maturation. The sequence is that of Nuclear envelope integral membrane protein 1 (nemp1) from Xenopus tropicalis (Western clawed frog).